We begin with the raw amino-acid sequence, 254 residues long: 5-oxoprolinase subunit A (254 aa).

This sequence belongs to the LamB/PxpA family. In terms of assembly, forms a complex composed of PxpA, PxpB and PxpC.

It catalyses the reaction 5-oxo-L-proline + ATP + 2 H2O = L-glutamate + ADP + phosphate + H(+). Catalyzes the cleavage of 5-oxoproline to form L-glutamate coupled to the hydrolysis of ATP to ADP and inorganic phosphate. The polypeptide is 5-oxoprolinase subunit A (Acinetobacter baumannii (strain AB307-0294)).